Reading from the N-terminus, the 1496-residue chain is Chromosome partition protein MukB (1496 aa).

63-70 contributes to the ATP binding site; the sequence is GGNGAGKS. Coiled-coil stretches lie at residues 328 to 493 and 536 to 632; these read KLEL…QRLS and KMQA…APAW. Residues 694-811 are flexible hinge; that stretch reads PDGSDDVRLN…EVPLFGRAAR (118 aa). Coiled-coil stretches lie at residues 861-1171 and 1235-1291; these read NPEE…SAEE and IDAI…LQNI. Residues 1082–1091 show a composition bias toward basic and acidic residues; that stretch reads RARSRRDELQ. The tract at residues 1082–1101 is disordered; the sequence is RARSRRDELQQRLSQQRSRK.

This sequence belongs to the SMC family. MukB subfamily. Homodimerization via its hinge domain. Binds to DNA via its C-terminal region. Interacts, and probably forms a ternary complex, with MukE and MukF via its C-terminal region. The complex formation is stimulated by calcium or magnesium. Interacts with tubulin-related protein FtsZ.

It localises to the cytoplasm. It is found in the nucleoid. Its function is as follows. Plays a central role in chromosome condensation, segregation and cell cycle progression. Functions as a homodimer, which is essential for chromosome partition. Involved in negative DNA supercoiling in vivo, and by this means organize and compact chromosomes. May achieve or facilitate chromosome segregation by condensation DNA from both sides of a centrally located replisome during cell division. The sequence is that of Chromosome partition protein MukB from Actinobacillus pleuropneumoniae serotype 3 (strain JL03).